The primary structure comprises 264 residues: Thymidylate synthase (264 aa).

Arg21 is a binding site for dUMP. His51 lines the (6R)-5,10-methylene-5,6,7,8-tetrahydrofolate pocket. 126–127 (RR) contributes to the dUMP binding site. Catalysis depends on Cys146, which acts as the Nucleophile. Residues 166–169 (RSCD), Asn177, and 207–209 (HLY) contribute to the dUMP site. Residue Asp169 participates in (6R)-5,10-methylene-5,6,7,8-tetrahydrofolate binding. Position 263 (Ala263) interacts with (6R)-5,10-methylene-5,6,7,8-tetrahydrofolate.

Belongs to the thymidylate synthase family. Bacterial-type ThyA subfamily. As to quaternary structure, homodimer.

It localises to the cytoplasm. The enzyme catalyses dUMP + (6R)-5,10-methylene-5,6,7,8-tetrahydrofolate = 7,8-dihydrofolate + dTMP. Its pathway is pyrimidine metabolism; dTTP biosynthesis. In terms of biological role, catalyzes the reductive methylation of 2'-deoxyuridine-5'-monophosphate (dUMP) to 2'-deoxythymidine-5'-monophosphate (dTMP) while utilizing 5,10-methylenetetrahydrofolate (mTHF) as the methyl donor and reductant in the reaction, yielding dihydrofolate (DHF) as a by-product. This enzymatic reaction provides an intracellular de novo source of dTMP, an essential precursor for DNA biosynthesis. In Sodalis glossinidius (strain morsitans), this protein is Thymidylate synthase.